Consider the following 255-residue polypeptide: Large ribosomal subunit protein uL4 (255 aa).

Belongs to the universal ribosomal protein uL4 family. In terms of assembly, part of the 50S ribosomal subunit.

One of the primary rRNA binding proteins, this protein initially binds near the 5'-end of the 23S rRNA. It is important during the early stages of 50S assembly. It makes multiple contacts with different domains of the 23S rRNA in the assembled 50S subunit and ribosome. In terms of biological role, forms part of the polypeptide exit tunnel. The chain is Large ribosomal subunit protein uL4 from Thermococcus gammatolerans (strain DSM 15229 / JCM 11827 / EJ3).